We begin with the raw amino-acid sequence, 514 residues long: 2-isopropylmalate synthase (514 aa).

One can recognise a Pyruvate carboxyltransferase domain in the interval leucine 5–valine 268. Residues aspartate 14, histidine 202, histidine 204, and asparagine 239 each coordinate Mn(2+). Positions lysine 395–serine 514 are regulatory domain.

Belongs to the alpha-IPM synthase/homocitrate synthase family. LeuA type 1 subfamily. As to quaternary structure, homodimer. The cofactor is Mn(2+).

It is found in the cytoplasm. It catalyses the reaction 3-methyl-2-oxobutanoate + acetyl-CoA + H2O = (2S)-2-isopropylmalate + CoA + H(+). Its pathway is amino-acid biosynthesis; L-leucine biosynthesis; L-leucine from 3-methyl-2-oxobutanoate: step 1/4. Its function is as follows. Catalyzes the condensation of the acetyl group of acetyl-CoA with 3-methyl-2-oxobutanoate (2-ketoisovalerate) to form 3-carboxy-3-hydroxy-4-methylpentanoate (2-isopropylmalate). The sequence is that of 2-isopropylmalate synthase from Burkholderia lata (strain ATCC 17760 / DSM 23089 / LMG 22485 / NCIMB 9086 / R18194 / 383).